The following is a 314-amino-acid chain: Olfactory receptor 5B17 (314 aa).

At 1-23 the chain is on the extracellular side; the sequence is MENNTEVSEFILLGLTNAPELQV. N-linked (GlcNAc...) asparagine glycosylation occurs at Asn-3. Residues 24–44 traverse the membrane as a helical segment; the sequence is PLFIMFTLIYLITLTGNLGMI. Over 45-52 the chain is Cytoplasmic; it reads ILILLDSH. Residues 53 to 73 form a helical membrane-spanning segment; the sequence is LHTPMYFFLSNLSLAGIGYSS. Residues 74-97 lie on the Extracellular side of the membrane; sequence AVTPKVLTGLLIEDKAISYSACAA. Cys-95 and Cys-187 form a disulfide bridge. A helical membrane pass occupies residues 98-118; that stretch reads QMFFCAVFATVENYLLSSMAY. Residues 119-137 are Cytoplasmic-facing; it reads DRYAAVCNPLHYTTTMTTR. Residues 138–158 form a helical membrane-spanning segment; sequence VCACLAIGCYVIGFLNASIQI. The Extracellular portion of the chain corresponds to 159-194; the sequence is GDTFRLSFCMSNVIHHFFCDKPAVITLTCSEKHISE. The helical transmembrane segment at 195 to 215 threads the bilayer; sequence LILVLISSFNVFFALLVTLIS. Residues 216-235 are Cytoplasmic-facing; the sequence is YLFILITILKRHTGKGYQKP. The chain crosses the membrane as a helical span at residues 236 to 256; the sequence is LSTCGSHLIAIFLFYITVIIM. The Extracellular portion of the chain corresponds to 257–269; the sequence is YIRPSSSHSMDTD. A helical membrane pass occupies residues 270–290; it reads KIASVFYTMIIPMLSPIVYTL. Topologically, residues 291-314 are cytoplasmic; sequence RNKDVKNAFMKVVEKAKYSLDSVF.

The protein belongs to the G-protein coupled receptor 1 family.

Its subcellular location is the cell membrane. Functionally, odorant receptor. In Homo sapiens (Human), this protein is Olfactory receptor 5B17 (OR5B17).